A 309-amino-acid polypeptide reads, in one-letter code: Transcriptional regulator HilD (309 aa).

The HTH araC/xylS-type domain occupies 209-306 (ERVYNIISSS…KTTPSTFIKM (98 aa)). DNA-binding regions (H-T-H motif) lie at residues 226-247 (TDVA…AEEG) and 273-296 (VNAV…KKYF).

This Salmonella typhimurium (strain SL1344) protein is Transcriptional regulator HilD (hilD).